The chain runs to 159 residues: Ribosomal RNA large subunit methyltransferase H (159 aa).

Residues L76, G108, and 127–132 contribute to the S-adenosyl-L-methionine site; that span reads FGRLTL.

It belongs to the RNA methyltransferase RlmH family. Homodimer.

The protein localises to the cytoplasm. It carries out the reaction pseudouridine(1915) in 23S rRNA + S-adenosyl-L-methionine = N(3)-methylpseudouridine(1915) in 23S rRNA + S-adenosyl-L-homocysteine + H(+). Specifically methylates the pseudouridine at position 1915 (m3Psi1915) in 23S rRNA. The polypeptide is Ribosomal RNA large subunit methyltransferase H (Listeria welshimeri serovar 6b (strain ATCC 35897 / DSM 20650 / CCUG 15529 / CIP 8149 / NCTC 11857 / SLCC 5334 / V8)).